A 1078-amino-acid polypeptide reads, in one-letter code: Nonribosomal peptide synthetase aneB (1078 aa).

Positions 20-417 are adenylation; that stretch reads FQQNVLDRPD…HGRKDTQVKI (398 aa). The Carrier domain occupies 559 to 635; the sequence is MPTTPLERQM…TLCQHVSVRP (77 aa). An O-(pantetheine 4'-phosphoryl)serine modification is found at Ser-596. The segment at 699-1013 is condensation; that stretch reads NYTLRLDVKL…HEMGYYGPVT (315 aa).

The protein belongs to the NRP synthetase family.

The enzyme catalyses holo-[peptidyl-carrier protein] + L-proline + ATP = L-prolyl-[peptidyl-carrier protein] + AMP + diphosphate. Its pathway is secondary metabolite biosynthesis. In terms of biological role, nonribosomal peptide synthetase; part of the gene cluster that mediates the biosynthesis of aculenes, a unique type of norsesquiterpenes that contain a nordaucane skeleton linked to an L-proline moiety and are of mixed biosynthetic origin. The pathway begins with the synthesis of dauca-4,7-diene by the terpene cyclase aneC using farnesyl pyrophosphate (FPP) as substrate. The cytochrome P450 monooxygenase aneF then performs the initial oxidation at C-12 of dauca-4,7-diene to yield asperaculane D. Asperaculane D is substrate of the cytochrome P450 monooxygenase aneD for C-10 hydroxylation to yield asperaculane E. The cytochrome P450 monooxygenase aneG then converts asperaculane E into aculene D via C-2 oxidation. The monomodular nonribosomal peptide synthase aneB adenylates L-proline and the thiohydrolase aneE transfers this activated L-proline derivative to aculenes D and C to produce respectively aculenes B and A. The dioxygenase aneA converts aculene D into aculene C, and aculene B into aculene A by introducing the 5,6-alkene moiety. Asperculanes A, B, C and F, as well as 14-prolyl asperculane C, might be shunt products of the pathway. The polypeptide is Nonribosomal peptide synthetase aneB (Aspergillus aculeatus (strain ATCC 16872 / CBS 172.66 / WB 5094)).